Here is a 559-residue protein sequence, read N- to C-terminus: Protein QNR-71 (559 aa).

The first 22 residues, 1–22, serve as a signal peptide directing secretion; the sequence is MSQAHRHLALLLPAEAVLCAAA. At 23–487 the chain is on the extracellular side; sequence MRFQDVLSNG…NGGSSSGTTK (465 aa). N-linked (GlcNAc...) asparagine glycans are attached at residues Asn-92, Asn-133, Asn-145, Asn-149, Asn-192, Asn-199, Asn-248, Asn-274, Asn-307, and Asn-311. Residues 239 to 326 enclose the PKD domain; that stretch reads VSMSQKHDRN…IIPVPCKPVT (88 aa). The tract at residues 329–356 is disordered; that stretch reads PSLPTPAVTTDASSNSDPSAPNEMAEDN. Residues 335–347 show a composition bias toward polar residues; that stretch reads AVTTDASSNSDPS. Residue Asn-459 is glycosylated (N-linked (GlcNAc...) asparagine). The chain crosses the membrane as a helical span at residues 488–508; it reads GVFIFLGLLAVFGAIGAFVLY. At 509-559 the chain is on the cytoplasmic side; sequence KRYKQYKPIERSAGQAENQEGLSAYVSNFKAFFFPKSTERNPLLKSKPGIV.

It belongs to the PMEL/NMB family. Melanocyte-specific, restricted to the pigmented layer of the retina and the epidermis.

Its subcellular location is the membrane. Functionally, could be involved in melanogenesis. The sequence is that of Protein QNR-71 (QNR-71) from Coturnix japonica (Japanese quail).